The following is a 197-amino-acid chain: Proteasome subunit beta 1 (197 aa).

A propeptide spans 1-6 (MNRKTG) (removed in mature form; by autocatalysis). Thr7 (nucleophile) is an active-site residue.

Belongs to the peptidase T1B family. As to quaternary structure, the 20S proteasome core is composed of 14 alpha and 14 beta subunits that assemble into four stacked heptameric rings, resulting in a barrel-shaped structure. The two inner rings, each composed of seven catalytic beta subunits, are sandwiched by two outer rings, each composed of seven alpha subunits. The catalytic chamber with the active sites is on the inside of the barrel. Has a gated structure, the ends of the cylinder being occluded by the N-termini of the alpha-subunits. Is capped at one or both ends by the proteasome regulatory ATPase, PAN.

Its subcellular location is the cytoplasm. It carries out the reaction Cleavage of peptide bonds with very broad specificity.. Its activity is regulated as follows. The formation of the proteasomal ATPase PAN-20S proteasome complex, via the docking of the C-termini of PAN into the intersubunit pockets in the alpha-rings, triggers opening of the gate for substrate entry. Interconversion between the open-gate and close-gate conformations leads to a dynamic regulation of the 20S proteasome proteolysis activity. Its function is as follows. Component of the proteasome core, a large protease complex with broad specificity involved in protein degradation. This chain is Proteasome subunit beta 1, found in Pyrococcus horikoshii (strain ATCC 700860 / DSM 12428 / JCM 9974 / NBRC 100139 / OT-3).